A 1086-amino-acid chain; its full sequence is NAD(P) transhydrogenase, mitochondrial (1086 aa).

Residues 1-43 (MANLLKTVVTGCSCPFLSNLGSCKVLPGKKNFLRAFHTHRILW) constitute a mitochondrion transit peptide. The Mitochondrial matrix portion of the chain corresponds to 44–474 (CKAPVKPGIP…TITPFRKTMT (431 aa)). At Lys70 the chain carries N6-acetyllysine. Lys117 is subject to N6-succinyllysine. Position 182 to 184 (182 to 184 (RVT)) interacts with NAD(+). Lys224 carries the N6-succinyllysine modification. NAD(+) is bound by residues Val237, 257–259 (DTR), and Gly287. N6-succinyllysine is present on Lys294. NAD(+) contacts are provided by Glu300 and Leu319. Position 331 is an N6-succinyllysine (Lys331). Residue Lys397 is modified to N6-acetyllysine. 4 helical membrane passes run 475–493 (SASV…GIAA), 501–521 (MVTT…GVTP), 527–546 (LMSV…LVLM), and 558–578 (GLAA…FLVT). The Mitochondrial matrix portion of the chain corresponds to 579–595 (QRMLDMFKRPTDPPEYN). 5 consecutive transmembrane segments (helical) span residues 596-616 (YLYL…LYSG), 622-642 (IMYL…STQG), 646-666 (LGNA…LGGL), 672-691 (LLAQ…LTIA), and 702-722 (LVAA…IAEY). The Cytoplasmic segment spans residues 723 to 739 (IIEYPHFATDAAANLTK). A run of 5 helical transmembrane segments spans residues 740-760 (IVAY…LVAY), 778-797 (HLLN…PFMM), 801-819 (FTTG…AVMG), 833-853 (VVIT…GFLL), and 857-879 (LLTI…MCVA). Residues 880–1086 (MNRSLANVIL…QAKVRESYQK (207 aa)) lie on the Mitochondrial matrix side of the membrane. NADP(+) contacts are provided by residues Tyr933, 965–970 (VAGRMP), 1007–1011 (GANDT), 1026–1027 (GM), 1042–1049 (KRSLGVGY), and 1068–1069 (DA). Lys1079 bears the N6-succinyllysine mark.

This sequence in the N-terminal section; belongs to the AlaDH/PNT family. In the C-terminal section; belongs to the PNT beta subunit family. Homodimer.

It localises to the mitochondrion inner membrane. The enzyme catalyses NAD(+) + NADPH + H(+)(in) = NADH + NADP(+) + H(+)(out). Its function is as follows. The transhydrogenation between NADH and NADP is coupled to respiration and ATP hydrolysis and functions as a proton pump across the membrane. May play a role in reactive oxygen species (ROS) detoxification in the adrenal gland. This is NAD(P) transhydrogenase, mitochondrial (NNT) from Ovis aries (Sheep).